Consider the following 259-residue polypeptide: tRNA pseudouridine synthase A (259 aa).

Asp-52 acts as the Nucleophile in catalysis. Position 111 (Tyr-111) interacts with substrate.

The protein belongs to the tRNA pseudouridine synthase TruA family. As to quaternary structure, homodimer.

The enzyme catalyses uridine(38/39/40) in tRNA = pseudouridine(38/39/40) in tRNA. Formation of pseudouridine at positions 38, 39 and 40 in the anticodon stem and loop of transfer RNAs. The protein is tRNA pseudouridine synthase A of Ruegeria sp. (strain TM1040) (Silicibacter sp.).